A 206-amino-acid polypeptide reads, in one-letter code: MARYIGPKLKLSRREGTDLFLKSGVRAIDSKCKIDTVPGQHGARKARLSDYGVQLREKQKVRRIYGVLEKQFRNYYRDAARQKGNTGENLLQLLEGRLDNVVYRMGFGATRAESRQLVSHKAIMVNGRVVNIPSFQVSPEDVICVREKAKKQARIKASLEVAGQREKPTWVEVDAAKMEGAFKRLPERSDLSADINEQLIVELYSK.

The S4 RNA-binding domain occupies 96 to 156; it reads GRLDNVVYRM…EKAKKQARIK (61 aa).

Belongs to the universal ribosomal protein uS4 family. Part of the 30S ribosomal subunit. Contacts protein S5. The interaction surface between S4 and S5 is involved in control of translational fidelity.

In terms of biological role, one of the primary rRNA binding proteins, it binds directly to 16S rRNA where it nucleates assembly of the body of the 30S subunit. Functionally, with S5 and S12 plays an important role in translational accuracy. The protein is Small ribosomal subunit protein uS4 of Aeromonas hydrophila subsp. hydrophila (strain ATCC 7966 / DSM 30187 / BCRC 13018 / CCUG 14551 / JCM 1027 / KCTC 2358 / NCIMB 9240 / NCTC 8049).